The chain runs to 218 residues: uncharacterized protein (218 aa).

This is an uncharacterized protein from Mycoplasma pneumoniae (strain ATCC 29342 / M129 / Subtype 1) (Mycoplasmoides pneumoniae).